Consider the following 570-residue polypeptide: La-related protein 7 (570 aa).

An N-acetylmethionine modification is found at Met1. Residues 1–16 (METENQKTMEESTKRK) are compositionally biased toward basic and acidic residues. 2 disordered regions span residues 1 to 24 (METE…KRSR) and 180 to 364 (LNNP…ERHK). The HTH La-type RNA-binding domain occupies 22–116 (RSRVKQVLAD…KPLGERPKDE (95 aa)). The RRM domain maps to 119–197 (RTVYVELLPK…PRKPGIFPKT (79 aa)). A compositionally biased stretch (basic residues) spans 213 to 222 (KKKKKKKGRI). Residue Lys231 forms a Glycyl lysine isopeptide (Lys-Gly) (interchain with G-Cter in SUMO2) linkage. Thr251 is modified (phosphothreonine). Residues Ser253 and Ser256 each carry the phosphoserine modification. At Thr260 the chain carries Phosphothreonine. The segment covering 286–295 (RAGKRERCSA) has biased composition (basic and acidic residues). 2 positions are modified to phosphoserine: Ser294 and Ser334. Thr335 carries the post-translational modification Phosphothreonine. Basic and acidic residues predominate over residues 340–349 (ETDRKGDSLS). Ser347 is modified (phosphoserine). The span at 350-363 (KVKRKHKKKHKERH) shows a compositional bias: basic residues. Residue Lys406 forms a Glycyl lysine isopeptide (Lys-Gly) (interchain with G-Cter in SUMO2) linkage. Positions 438–551 (QFVTGVIVKI…TEKLITKAEK (114 aa)) constitute a xRRM domain.

It belongs to the LARP7 family. As to quaternary structure, core component of the 7SK RNP complex, at least composed of 7SK RNA, LARP7, MEPCE, HEXIM1 (or HEXIM2) and P-TEFb (composed of CDK9 and CCNT1/cyclin-T1). Interacts with METTL16. Interacts with RBM7; upon genotoxic stress this interaction is enhanced, triggering the release of inactive P-TEFb complex from the core, yielding to P-TEFb complex activation. Associates with box C/D small nucleolar ribonucleoprotein (snoRNP) complexes.

The protein localises to the nucleus. Its subcellular location is the nucleoplasm. RNA-binding protein that specifically binds distinct small nuclear RNA (snRNAs) and regulates their processing and function. Specifically binds the 7SK snRNA (7SK RNA) and acts as a core component of the 7SK ribonucleoprotein (RNP) complex, thereby acting as a negative regulator of transcription elongation by RNA polymerase II. The 7SK RNP complex sequesters the positive transcription elongation factor b (P-TEFb) in a large inactive 7SK RNP complex preventing RNA polymerase II phosphorylation and subsequent transcriptional elongation. The 7SK RNP complex also promotes snRNA gene transcription by RNA polymerase II via interaction with the little elongation complex (LEC). LARP7 specifically binds to the highly conserved 3'-terminal U-rich stretch of 7SK RNA; on stimulation, remains associated with 7SK RNA, whereas P-TEFb is released from the complex. LARP7 also acts as a regulator of mRNA splicing fidelity by promoting U6 snRNA processing. Specifically binds U6 snRNAs and associates with a subset of box C/D RNP complexes: promotes U6 snRNA 2'-O-methylation by facilitating U6 snRNA loading into box C/D RNP complexes. U6 snRNA 2'-O-methylation is required for mRNA splicing fidelity. Binds U6 snRNAs with a 5'-CAGGG-3' sequence motif. U6 snRNA processing is required for spermatogenesis. This Mus musculus (Mouse) protein is La-related protein 7.